We begin with the raw amino-acid sequence, 420 residues long: UDP-N-acetylglucosamine 1-carboxyvinyltransferase (420 aa).

22–23 (KN) contributes to the phosphoenolpyruvate binding site. Arg-95 contacts UDP-N-acetyl-alpha-D-glucosamine. The active-site Proton donor is the Cys-119. Residue Cys-119 is modified to 2-(S-cysteinyl)pyruvic acid O-phosphothioketal. Residues 124–128 (RPIDQ), Asp-307, and Ile-329 each bind UDP-N-acetyl-alpha-D-glucosamine.

It belongs to the EPSP synthase family. MurA subfamily.

Its subcellular location is the cytoplasm. It catalyses the reaction phosphoenolpyruvate + UDP-N-acetyl-alpha-D-glucosamine = UDP-N-acetyl-3-O-(1-carboxyvinyl)-alpha-D-glucosamine + phosphate. It participates in cell wall biogenesis; peptidoglycan biosynthesis. Cell wall formation. Adds enolpyruvyl to UDP-N-acetylglucosamine. In Myxococcus xanthus (strain DK1622), this protein is UDP-N-acetylglucosamine 1-carboxyvinyltransferase.